The chain runs to 351 residues: Probable sugar phosphate/phosphate translocator At5g11230 (351 aa).

Helical transmembrane passes span 15–35 (IVLS…VIVY), 49–69 (FPIS…FLII), 89–109 (VVPI…AYIY), 113–133 (SFIQ…GVLF), 141–161 (DTMM…YGEA), 165–185 (VWGV…LVLI), 205–225 (VAPC…FPVL), 236–256 (AIFG…FLLV), 263–283 (TMNV…WSVI), and 286–306 (TVTP…AYYN). The 119-residue stretch at 38 to 156 (YILDKKMYNW…LSISFGVAIA (119 aa)) folds into the EamA domain. Positions 321–351 (KKIQQADEESGRLLEEREGDVEGKKNDQSGN) are disordered.

This sequence belongs to the TPT transporter family. TPT (TC 2.A.7.9) subfamily.

The protein localises to the membrane. The protein is Probable sugar phosphate/phosphate translocator At5g11230 of Arabidopsis thaliana (Mouse-ear cress).